Reading from the N-terminus, the 265-residue chain is Capsule polysaccharide export inner-membrane protein CtrC (265 aa).

6 helical membrane-spanning segments follow: residues 37–57, 67–84, 121–141, 148–168, 178–198, and 238–258; these read IGFL…VLMW, TLNI…LMMW, IAGA…IGWI, FYML…GLVI, FGKI…AFFF, and WYIV…VSKF. The 222-residue stretch at 37–258 folds into the ABC transmembrane type-2 domain; the sequence is IGFLWLFVEP…LFGLAMVSKF (222 aa).

It belongs to the ABC-2 integral membrane protein family.

The protein localises to the cell inner membrane. May form an ATP-driven capsule polysaccharide export apparatus, in association with the CtrB and CtrD proteins. This is Capsule polysaccharide export inner-membrane protein CtrC (ctrC) from Neisseria meningitidis serogroup B (strain ATCC BAA-335 / MC58).